Consider the following 241-residue polypeptide: DNA repair protein RecO (241 aa).

It belongs to the RecO family.

In terms of biological role, involved in DNA repair and RecF pathway recombination. The sequence is that of DNA repair protein RecO from Xanthomonas campestris pv. campestris (strain B100).